We begin with the raw amino-acid sequence, 344 residues long: Ribosome biogenesis protein RPF2 (344 aa).

A Brix domain is found at 28-243 (KQALFIPGQS…IGRIHTPSPD (216 aa)). Position 73 is a phosphoserine (S73). Residues 291-344 (KGLKSKFDQGTEEGDGEVDEDYEDEASYSDDGQEYEEEFVSATDIEPSAKRQKK) are disordered. The span at 300–329 (GTEEGDGEVDEDYEDEASYSDDGQEYEEEF) shows a compositional bias: acidic residues.

Belongs to the RPF2 family. In terms of assembly, part of a complex that includes BRX1, RPF1, RPF2 and SSF1 or SSF2. Component of a hexameric 5S RNP precursor complex, composed of 5S RNA, RRS1, RPF2, RPL5, RPL11A/RPL11B and SYO1; this complex acts as a precursor for ribosome assembly.

It localises to the nucleus. The protein resides in the nucleolus. In terms of biological role, required for biogenesis of the 60S ribosomal subunit. The sequence is that of Ribosome biogenesis protein RPF2 (RPF2) from Saccharomyces cerevisiae (strain ATCC 204508 / S288c) (Baker's yeast).